The sequence spans 267 residues: Multivesicular body subunit 12A (267 aa).

The region spanning 7-146 (AAPLSGVGWA…SFAIWCKKGA (140 aa)) is the MABP domain. The SH3-binding motif lies at 154 to 159 (PVPKPR). A UMA domain is found at 210–259 (MDGVPFTLHPKFERSPKSDSSAILTDLTVKSLADIEKEYNYTFVVERTAA).

Belongs to the MVB12 family. Component of the ESCRT-I complex (endosomal sorting complex required for transport I).

It is found in the cytoplasm. The protein resides in the endosome. Its subcellular location is the late endosome membrane. Functionally, component of the ESCRT-I complex, a regulator of vesicular trafficking process. Required for the sorting of endocytic ubiquitinated cargos into multivesicular bodies. This Gallus gallus (Chicken) protein is Multivesicular body subunit 12A (MVB12A).